Consider the following 331-residue polypeptide: Outer membrane lipoprotein PM1514 (331 aa).

Residues 1–20 (MQYFDIKKSLPVFCSLLITA) form the signal peptide. Cysteine 21 carries N-palmitoyl cysteine lipidation. Cysteine 21 carries the S-diacylglycerol cysteine lipid modification.

The protein resides in the cell outer membrane. It localises to the cell surface. This is Outer membrane lipoprotein PM1514 from Pasteurella multocida (strain Pm70).